Reading from the N-terminus, the 110-residue chain is MNSRHKGTQAEDFACVFLRECGFEILERNFFARYGEIDIIALKDNVVHFIEVKSGESFEPIYNITPSKIKKLTKAIGFYLFTHKITQAYCLDALIIKNGECELIENITLC.

This sequence belongs to the UPF0102 family.

The sequence is that of UPF0102 protein HH_1751 from Helicobacter hepaticus (strain ATCC 51449 / 3B1).